A 453-amino-acid chain; its full sequence is Signal recognition particle protein (453 aa).

Residues Gly-107–Thr-114, Asp-190–Arg-194, and Thr-248–Asp-251 contribute to the GTP site.

It belongs to the GTP-binding SRP family. SRP54 subfamily. Part of the signal recognition particle protein translocation system, which is composed of SRP and FtsY. SRP is a ribonucleoprotein composed of Ffh and a 4.5S RNA molecule.

The protein resides in the cytoplasm. It carries out the reaction GTP + H2O = GDP + phosphate + H(+). Its function is as follows. Involved in targeting and insertion of nascent membrane proteins into the cytoplasmic membrane. Binds to the hydrophobic signal sequence of the ribosome-nascent chain (RNC) as it emerges from the ribosomes. The SRP-RNC complex is then targeted to the cytoplasmic membrane where it interacts with the SRP receptor FtsY. Interaction with FtsY leads to the transfer of the RNC complex to the Sec translocase for insertion into the membrane, the hydrolysis of GTP by both Ffh and FtsY, and the dissociation of the SRP-FtsY complex into the individual components. This is Signal recognition particle protein from Escherichia coli O157:H7.